The primary structure comprises 105 residues: uncharacterized protein (105 aa).

The next 3 membrane-spanning stretches (helical) occupy residues 3-23 (ISPLIAGLIGGFTAAILQALF), 41-61 (DLVNWIINHLFGTTLGMALVS), and 63-83 (AFPVLTVVGIFIGALITTFIY).

Its subcellular location is the cell membrane. This is an uncharacterized protein from Methanocaldococcus jannaschii (strain ATCC 43067 / DSM 2661 / JAL-1 / JCM 10045 / NBRC 100440) (Methanococcus jannaschii).